Consider the following 98-residue polypeptide: uncharacterized protein (98 aa).

The protein belongs to the HHV-5 UL19 protein family.

This is an uncharacterized protein from Human cytomegalovirus (strain AD169) (HHV-5).